The chain runs to 801 residues: MNNKVLQTLEYDKIKLQLNDFLSTPTGLQEANELQPVSDVDLINHWLAETADAVLIDRLKGGIPLSKLSDITPHLKRLNIEASLSATELSEMSLVLRNTSTIASFFEQMQDEAIGESLRVLPEQAKNLVTLPDITRQIQIAIDSSGRLNDEASYELKHVRDRINGTEQAVKNQMQAYTRGKTAQYLSDPIVTIRSDRYVLPVKAEYRSQFGGVVHDQSQTGQTLYVEPQAVVTLNNKLSELRVQEQAEEQRVLQELSATLAPHTEEIANNVTILGHFDFVNAKARLAARLDAMQPMVNTENKVDLQQAWHPLLDKDLAVANDIALGDGYKAIIITGPNTGGKTITIKTLGILQLMAQSGLFITTKRPSTVGVFHEIFADIGDEQSIEQSLSTFSSHMANIVSMIDRIDDKTLVIFDELGAGTDPAEGAALAIAILDKVASLGAFVIATTHYPELKLYGYNRPETLNASMVFDVSTLKPTYQFLMGVPGQSNALAIAKRLGFGDDVIGAATALTSDADQDLNQMIADLVAQRDAVKQHDVALSEQLKATEKQSEALSEQQRQLEKERAKIVLDAKNEANHIVAATKKQAEQMISEIRKARLNAGQSAGELSEQDLQAKKRQLDGLRQNSSLEKNKILQKAKRAKQLAAGDEITVQSYGQQGTLIKQHSNGQWEVEMGILKMLVDEDDIVKTEATAKAQQSKAKQKQQKIVKTKTASGSARATAKSRLDLRGVRYEAALAELDRYLDTAVLANLGTVEIIHGKGTGALRQGVTEFLRSDRRVKAYHFANANAGGDGATIAELS.

Position 336–343 (336–343 (GPNTGGKT)) interacts with ATP. Residues 696 to 721 (AQQSKAKQKQQKIVKTKTASGSARAT) are disordered. A compositionally biased stretch (basic residues) spans 701–710 (AKQKQQKIVK). The Smr domain occupies 726–801 (LDLRGVRYEA…GDGATIAELS (76 aa)).

The protein belongs to the DNA mismatch repair MutS family. MutS2 subfamily. As to quaternary structure, homodimer. Binds to stalled ribosomes, contacting rRNA.

Functionally, endonuclease that is involved in the suppression of homologous recombination and thus may have a key role in the control of bacterial genetic diversity. Acts as a ribosome collision sensor, splitting the ribosome into its 2 subunits. Detects stalled/collided 70S ribosomes which it binds and splits by an ATP-hydrolysis driven conformational change. Acts upstream of the ribosome quality control system (RQC), a ribosome-associated complex that mediates the extraction of incompletely synthesized nascent chains from stalled ribosomes and their subsequent degradation. Probably generates substrates for RQC. In Leuconostoc citreum (strain KM20), this protein is Endonuclease MutS2.